The sequence spans 409 residues: tRNA(Met) cytidine acetate ligase (409 aa).

ATP is bound by residues Val7–His20, Gly102, Asn169, and Arg194.

This sequence belongs to the TmcAL family.

The protein localises to the cytoplasm. The enzyme catalyses cytidine(34) in elongator tRNA(Met) + acetate + ATP = N(4)-acetylcytidine(34) in elongator tRNA(Met) + AMP + diphosphate. In terms of biological role, catalyzes the formation of N(4)-acetylcytidine (ac(4)C) at the wobble position of elongator tRNA(Met), using acetate and ATP as substrates. First activates an acetate ion to form acetyladenylate (Ac-AMP) and then transfers the acetyl group to tRNA to form ac(4)C34. The protein is tRNA(Met) cytidine acetate ligase of Clostridium botulinum (strain Langeland / NCTC 10281 / Type F).